We begin with the raw amino-acid sequence, 442 residues long: Tryptophan synthase beta chain 2 (442 aa).

Lys122 carries the post-translational modification N6-(pyridoxal phosphate)lysine.

This sequence belongs to the TrpB family. In terms of assembly, tetramer of two alpha and two beta chains. It depends on pyridoxal 5'-phosphate as a cofactor.

It catalyses the reaction (1S,2R)-1-C-(indol-3-yl)glycerol 3-phosphate + L-serine = D-glyceraldehyde 3-phosphate + L-tryptophan + H2O. Its pathway is amino-acid biosynthesis; L-tryptophan biosynthesis; L-tryptophan from chorismate: step 5/5. Its function is as follows. The beta subunit is responsible for the synthesis of L-tryptophan from indole and L-serine. This chain is Tryptophan synthase beta chain 2 (trpB2), found in Methanosarcina mazei (strain ATCC BAA-159 / DSM 3647 / Goe1 / Go1 / JCM 11833 / OCM 88) (Methanosarcina frisia).